Consider the following 166-residue polypeptide: Putative esterase sll0410 (166 aa).

Aspartate 45 is an active-site residue.

This sequence belongs to the 4-hydroxybenzoyl-CoA thioesterase family.

This is Putative esterase sll0410 from Synechocystis sp. (strain ATCC 27184 / PCC 6803 / Kazusa).